Here is a 60-residue protein sequence, read N- to C-terminus: Andropin (60 aa).

A signal peptide spans 1–23; that stretch reads MKYFVVLVVLALILAIAVGPSDA.

Belongs to the andropin family. In terms of tissue distribution, ejaculatory duct of adult males.

It localises to the secreted. Functionally, male-specific peptide with moderate activity against Gram-positive bacteria. This Drosophila simulans (Fruit fly) protein is Andropin (Anp).